An 888-amino-acid polypeptide reads, in one-letter code: Alanine--tRNA ligase (888 aa).

Positions 570, 574, 673, and 677 each coordinate Zn(2+).

The protein belongs to the class-II aminoacyl-tRNA synthetase family. The cofactor is Zn(2+).

The protein resides in the cytoplasm. The catalysed reaction is tRNA(Ala) + L-alanine + ATP = L-alanyl-tRNA(Ala) + AMP + diphosphate. Functionally, catalyzes the attachment of alanine to tRNA(Ala) in a two-step reaction: alanine is first activated by ATP to form Ala-AMP and then transferred to the acceptor end of tRNA(Ala). Also edits incorrectly charged Ser-tRNA(Ala) and Gly-tRNA(Ala) via its editing domain. This Chlorobium phaeobacteroides (strain DSM 266 / SMG 266 / 2430) protein is Alanine--tRNA ligase.